The following is a 347-amino-acid chain: Gibberellin 3-beta-dioxygenase 2 (347 aa).

In terms of domain architecture, Fe2OG dioxygenase spans 197 to 301 (DFQGTQAVIQ…RFSMAYLWGP (105 aa)). The Fe cation site is built by His-225, Asp-227, and His-282. The active site involves Arg-292. Arg-292 is a 2-oxoglutarate binding site.

Belongs to the iron/ascorbate-dependent oxidoreductase family. GA3OX subfamily. It depends on L-ascorbate as a cofactor. The cofactor is Fe(2+). Highly expressed in seedlings but also expressed in roots, leaves, stems, flowers, siliques and seeds. Detected predominantly in the hypocotyl and roots of young seedlings and in the petioles and vasculature of leaves. Not expressed in the shoot apical meristem, but found in the elongation zone, the quiescent center cells and the columella cells of the root tips. Found in the cortex and the endodermis of the embryo axis in germinating seeds.

It catalyses the reaction gibberellin A20 + 2-oxoglutarate + O2 = gibberellin A1 + succinate + CO2. The protein operates within plant hormone biosynthesis; gibberellin biosynthesis. Functionally, converts the inactive gibberellin (GA) precursors GA9 and GA20 in the bioactives gibberellins GA4 and GA1. Involved in the production of bioactive GA for vegetative growth and development. The sequence is that of Gibberellin 3-beta-dioxygenase 2 from Arabidopsis thaliana (Mouse-ear cress).